The following is a 352-amino-acid chain: MPSHPKRFQINAKNYFLTYPQCSLSKEESLSQLQALNTPINKKFIKICRELHEDGQPHLHVLIQFEGKYCCQNQRFFDLVSPTRSAHFHPNIQRAKSSSDVKTYIDKDGDTLVWGEFQVDGRSARGGCQTSNDAAAEALNASSKEEALQIIREKIPEKYLFQFHNLNSNLDRIFDKTPEPWLPPFHVSSFTNVPDEMRQWAENYFGKSSAARPERPISIIIEGDSRTGKTMWARSLGPHNYLSGHLDLNSRVYSNKVEYNVIDDVTPQYLKLKHWKELIGAQRDWQTNCKYGKPVQIKGGIPSIVLCNPGEGASYKVFLDKEENTPLKNWTFHNAKFVFLNSPLYQSSTQSS.

Positions 9–117 (QINAKNYFLT…DGDTLVWGEF (109 aa)) constitute a CRESS-DNA virus Rep endonuclease domain. The RCR-1 motif lies at 16 to 19 (FLTY). The a divalent metal cation site is built by Glu-50, His-58, and His-60. The RCR-2 signature appears at 58-60 (HLH). The active-site For DNA cleavage activity is the Tyr-104. The RCR-3 motif lies at 104 to 107 (YIDK). Residue Asp-108 coordinates a divalent metal cation. The tract at residues 144–154 (KEEALQIIREK) is binding to RBR1. The segment at 157–177 (EKYLFQFHNLNSNLDRIFDKT) is oligomerization. 223–230 (GDSRTGKT) is a binding site for ATP.

The protein belongs to the geminiviridae Rep protein family. In terms of assembly, homooligomer. Interacts with the replication enhancer protein (REn). Interacts with host retinoblastoma-related protein 1 (RBR1), and may thereby induce the transcription of host replicative enzymes even if the cell is not dividing anymore. Interacts with host PCNA. Interacts with host SCE1 protein. Interacts with host GRIK1, GRIK2, GRIMP and histone H3. Mg(2+) is required as a cofactor. Requires Mn(2+) as cofactor.

It localises to the host nucleus. Its function is as follows. Essential for the replication of viral ssDNA. The closed circular ssDNA genome is first converted to a superhelical dsDNA. Rep binds a specific region at the genome origin of replication. It introduces an endonucleolytic nick within the conserved sequence 5'-TAATATTAC-3' in the intergenic region of the genome present in all geminiviruses, thereby initiating the rolling circle replication (RCR). Following cleavage, binds covalently to the 5'-phosphate of DNA as a tyrosyl ester. The cleavage gives rise to a free 3'-OH that serves as a primer for the cellular DNA polymerase. The polymerase synthesizes the (+) strand DNA by rolling circle mechanism. After one round of replication, a Rep-catalyzed nucleotidyl transfer reaction releases a circular single-stranded virus genome, thereby terminating the replication. Displays origin-specific DNA cleavage, nucleotidyl transferase, ATPase and helicase activities. The protein is Replication-associated protein of Solanum lycopersicum (Tomato).